The primary structure comprises 556 residues: Dihydroxy-acid dehydratase (556 aa).

Asp-78 contributes to the Mg(2+) binding site. Position 119 (Cys-119) interacts with [2Fe-2S] cluster. Positions 120 and 121 each coordinate Mg(2+). Position 121 is an N6-carboxylysine (Lys-121). Cys-191 serves as a coordination point for [2Fe-2S] cluster. Glu-442 serves as a coordination point for Mg(2+). Catalysis depends on Ser-468, which acts as the Proton acceptor.

Belongs to the IlvD/Edd family. Homodimer. Requires [2Fe-2S] cluster as cofactor. Mg(2+) serves as cofactor.

It carries out the reaction (2R)-2,3-dihydroxy-3-methylbutanoate = 3-methyl-2-oxobutanoate + H2O. It catalyses the reaction (2R,3R)-2,3-dihydroxy-3-methylpentanoate = (S)-3-methyl-2-oxopentanoate + H2O. It participates in amino-acid biosynthesis; L-isoleucine biosynthesis; L-isoleucine from 2-oxobutanoate: step 3/4. Its pathway is amino-acid biosynthesis; L-valine biosynthesis; L-valine from pyruvate: step 3/4. Functions in the biosynthesis of branched-chain amino acids. Catalyzes the dehydration of (2R,3R)-2,3-dihydroxy-3-methylpentanoate (2,3-dihydroxy-3-methylvalerate) into 2-oxo-3-methylpentanoate (2-oxo-3-methylvalerate) and of (2R)-2,3-dihydroxy-3-methylbutanoate (2,3-dihydroxyisovalerate) into 2-oxo-3-methylbutanoate (2-oxoisovalerate), the penultimate precursor to L-isoleucine and L-valine, respectively. This is Dihydroxy-acid dehydratase from Clostridium kluyveri (strain NBRC 12016).